The following is a 1140-amino-acid chain: Receptor-type guanylate cyclase gcy-3 (1140 aa).

A signal peptide spans 1–21 (MKNVFQLLIPLFFHLFSLVSL). Topologically, residues 22–495 (QNIPVSTGTT…CPLPFWEQYG (474 aa)) are extracellular. Residues Asn220, Asn301, Asn349, Asn385, Asn418, Asn441, and Asn459 are each glycosylated (N-linked (GlcNAc...) asparagine). A helical membrane pass occupies residues 496–516 (ILIFVGAGVFLIMITTNLICF). Over 517 to 1140 (LFMIKNRREE…RQYKMDTLKI (624 aa)) the chain is Cytoplasmic. One can recognise a Protein kinase domain in the interval 538–826 (FVKLRELERK…NICEQLRDLM (289 aa)). Residues 544 to 552 (LERKSKGTS) and Lys582 contribute to the ATP site. The Guanylate cyclase domain maps to 897–1027 (TVFFSDVVKF…DTVNTASRME (131 aa)). The tract at residues 1083-1140 (PSISNRSTPPVTQERFTVRAPDTPEARSVSSHGSRPSSNHNNNNDPLYRQYKMDTLKI) is disordered. Polar residues predominate over residues 1084–1097 (SISNRSTPPVTQER). Residues 1109 to 1126 (RSVSSHGSRPSSNHNNNN) show a composition bias toward low complexity.

The protein belongs to the adenylyl cyclase class-4/guanylyl cyclase family. As to expression, expressed asymmetrically in ASE right (ASER) sensory neuron and bilaterally in ASI sensory neurons. Expressed in PVT interneuron.

Its subcellular location is the cell membrane. It carries out the reaction GTP = 3',5'-cyclic GMP + diphosphate. Functionally, guanylate cyclase involved in the production of the second messenger cGMP. This Caenorhabditis elegans protein is Receptor-type guanylate cyclase gcy-3.